Consider the following 429-residue polypeptide: Guanine nucleotide-binding protein subunit alpha (429 aa).

Residue Gly2 is the site of N-myristoyl glycine attachment. Residue Cys3 is the site of S-palmitoyl cysteine attachment. A G-alpha domain is found at 40–429; it reads KGVKLLLLGA…QQNLKKSGIM (390 aa). A G1 motif region spans residues 43–56; sequence KLLLLGAGESGKST. GTP contacts are provided by Glu51, Ser52, Gly53, Lys54, Ser55, and Thr56. Mg(2+) is bound at residue Ser55. Residues 125 to 197 are not present in other G-proteins; sequence LKQIDADVAG…KDSEQFTRLS (73 aa). The segment at 249–257 is G2 motif; the sequence is DILKGRIKT. 7 residues coordinate GTP: Leu251, Thr257, Gly279, Asn345, Lys346, Asp348, and Ala401. A Mg(2+)-binding site is contributed by Thr257. Residues 272-281 are G3 motif; sequence FKVLDAGGQR. A G4 motif region spans residues 341-348; the sequence is ILFLNKID. The tract at residues 399–404 is G5 motif; it reads TCATDS.

The protein belongs to the G-alpha family. G(q) subfamily. As to quaternary structure, g proteins are composed of 3 units; alpha, beta and gamma. The alpha chain contains the guanine nucleotide binding site. Requires Mg(2+) as cofactor.

Its function is as follows. Guanine nucleotide-binding proteins (G proteins) are involved as modulators or transducers in various transmembrane signaling systems. Involved in the mating pathway. This is Guanine nucleotide-binding protein subunit alpha (CAG1) from Candida albicans (strain WO-1) (Yeast).